We begin with the raw amino-acid sequence, 197 residues long: Recombination protein RecR (197 aa).

The C4-type zinc finger occupies 57-72 (CSTCFGITESDPCHLC). The Toprim domain occupies 79–174 (ASICVVEEPQ…KVTRLAHGIP (96 aa)).

The protein belongs to the RecR family.

May play a role in DNA repair. It seems to be involved in an RecBC-independent recombinational process of DNA repair. It may act with RecF and RecO. The chain is Recombination protein RecR from Geotalea uraniireducens (strain Rf4) (Geobacter uraniireducens).